The chain runs to 96 residues: DNA-Binding protein G5P (96 aa).

This sequence belongs to the inovirus G5P protein family. In terms of assembly, homodimer.

Functionally, binds to DNA in a highly cooperative manner without pronounced sequence specificity. During synthesis of the single-stranded (progeny) viral DNA, prevents the conversion into the double-stranded replicative form. G5P is displaced by the capsid protein G8P during phage assembly on the inner bacterial membrane. This chain is DNA-Binding protein G5P (V), found in Escherichia coli (Bacteriophage If1).